The sequence spans 282 residues: Lipoyl synthase (282 aa).

Cys37, Cys42, Cys48, Cys63, Cys67, Cys70, and Ser275 together coordinate [4Fe-4S] cluster. The Radical SAM core domain maps to 49–264; sequence WSRGTATFMI…RLVGIEKGFR (216 aa).

The protein belongs to the radical SAM superfamily. Lipoyl synthase family. Requires [4Fe-4S] cluster as cofactor.

The protein resides in the cytoplasm. It carries out the reaction [[Fe-S] cluster scaffold protein carrying a second [4Fe-4S](2+) cluster] + N(6)-octanoyl-L-lysyl-[protein] + 2 oxidized [2Fe-2S]-[ferredoxin] + 2 S-adenosyl-L-methionine + 4 H(+) = [[Fe-S] cluster scaffold protein] + N(6)-[(R)-dihydrolipoyl]-L-lysyl-[protein] + 4 Fe(3+) + 2 hydrogen sulfide + 2 5'-deoxyadenosine + 2 L-methionine + 2 reduced [2Fe-2S]-[ferredoxin]. It participates in protein modification; protein lipoylation via endogenous pathway; protein N(6)-(lipoyl)lysine from octanoyl-[acyl-carrier-protein]: step 2/2. Functionally, catalyzes the radical-mediated insertion of two sulfur atoms into the C-6 and C-8 positions of the octanoyl moiety bound to the lipoyl domains of lipoate-dependent enzymes, thereby converting the octanoylated domains into lipoylated derivatives. The polypeptide is Lipoyl synthase (Porphyromonas gingivalis (strain ATCC BAA-308 / W83)).